Consider the following 442-residue polypeptide: Trigger factor (442 aa).

Residues Tyr163–Leu248 enclose the PPIase FKBP-type domain.

Belongs to the FKBP-type PPIase family. Tig subfamily.

It localises to the cytoplasm. It carries out the reaction [protein]-peptidylproline (omega=180) = [protein]-peptidylproline (omega=0). Involved in protein export. Acts as a chaperone by maintaining the newly synthesized protein in an open conformation. Functions as a peptidyl-prolyl cis-trans isomerase. In Buchnera aphidicola subsp. Acyrthosiphon pisum (strain 5A), this protein is Trigger factor.